Reading from the N-terminus, the 297-residue chain is Ezy-1 protein (297 aa).

Disordered regions lie at residues Met-1–Gly-34, Phe-115–Ser-151, and Gln-255–Met-297. The span at Ala-123–Glu-135 shows a compositional bias: acidic residues. The segment covering Ala-136–Ser-150 has biased composition (low complexity). Residues Asp-259 to Glu-269 show a composition bias toward basic and acidic residues.

The polypeptide is Ezy-1 protein (Ezy-1) (Chlamydomonas reinhardtii (Chlamydomonas smithii)).